Here is a 404-residue protein sequence, read N- to C-terminus: Tryptophan synthase beta chain (404 aa).

Residue Lys95 is modified to N6-(pyridoxal phosphate)lysine.

Belongs to the TrpB family. Tetramer of two alpha and two beta chains. The cofactor is pyridoxal 5'-phosphate.

It carries out the reaction (1S,2R)-1-C-(indol-3-yl)glycerol 3-phosphate + L-serine = D-glyceraldehyde 3-phosphate + L-tryptophan + H2O. It participates in amino-acid biosynthesis; L-tryptophan biosynthesis; L-tryptophan from chorismate: step 5/5. The beta subunit is responsible for the synthesis of L-tryptophan from indole and L-serine. This is Tryptophan synthase beta chain (trpB) from Thermus thermophilus (strain ATCC BAA-163 / DSM 7039 / HB27).